Reading from the N-terminus, the 449-residue chain is Glucose-6-phosphate isomerase (449 aa).

Glutamate 291 (proton donor) is an active-site residue. Active-site residues include histidine 312 and lysine 426.

It belongs to the GPI family.

It localises to the cytoplasm. It catalyses the reaction alpha-D-glucose 6-phosphate = beta-D-fructose 6-phosphate. Its pathway is carbohydrate biosynthesis; gluconeogenesis. It participates in carbohydrate degradation; glycolysis; D-glyceraldehyde 3-phosphate and glycerone phosphate from D-glucose: step 2/4. Functionally, catalyzes the reversible isomerization of glucose-6-phosphate to fructose-6-phosphate. The sequence is that of Glucose-6-phosphate isomerase from Streptococcus pyogenes serotype M49 (strain NZ131).